A 156-amino-acid polypeptide reads, in one-letter code: Ribosomal RNA large subunit methyltransferase H (156 aa).

Residues L73, G104, and 123–128 (LSPLTL) contribute to the S-adenosyl-L-methionine site.

Belongs to the RNA methyltransferase RlmH family. As to quaternary structure, homodimer.

The protein localises to the cytoplasm. The enzyme catalyses pseudouridine(1915) in 23S rRNA + S-adenosyl-L-methionine = N(3)-methylpseudouridine(1915) in 23S rRNA + S-adenosyl-L-homocysteine + H(+). Specifically methylates the pseudouridine at position 1915 (m3Psi1915) in 23S rRNA. The chain is Ribosomal RNA large subunit methyltransferase H from Hahella chejuensis (strain KCTC 2396).